The sequence spans 500 residues: 4-aminobutyrate aminotransferase, mitochondrial (500 aa).

A mitochondrion-targeting transit peptide spans 1 to 28; the sequence is MASMLVAQRLACSFQHSYRLLVPGSRHI. Cys-163 is a binding site for [2Fe-2S] cluster. 164–165 serves as a coordination point for pyridoxal 5'-phosphate; that stretch reads GS. Cys-166 contributes to the [2Fe-2S] cluster binding site. Arg-220 is a substrate binding site. The residue at position 231 (Lys-231) is an N6-succinyllysine. Lys-252 is modified (N6-acetyllysine; alternate). The residue at position 252 (Lys-252) is an N6-succinyllysine; alternate. Lys-279 and Lys-318 each carry N6-acetyllysine. Lys-357 is subject to N6-(pyridoxal phosphate)lysine. Thr-381 serves as a coordination point for pyridoxal 5'-phosphate. Lys-413 bears the N6-acetyllysine; alternate mark. Lys-413 is subject to N6-succinyllysine; alternate. N6-acetyllysine occurs at positions 452 and 470.

The protein belongs to the class-III pyridoxal-phosphate-dependent aminotransferase family. Homodimer; disulfide-linked. Pyridoxal 5'-phosphate is required as a cofactor. Requires [2Fe-2S] cluster as cofactor.

Its subcellular location is the mitochondrion matrix. It carries out the reaction 4-aminobutanoate + 2-oxoglutarate = succinate semialdehyde + L-glutamate. It catalyses the reaction (S)-3-amino-2-methylpropanoate + 2-oxoglutarate = 2-methyl-3-oxopropanoate + L-glutamate. Catalyzes the conversion of gamma-aminobutyrate and L-beta-aminoisobutyrate to succinate semialdehyde and methylmalonate semialdehyde, respectively. Can also convert delta-aminovalerate and beta-alanine. The sequence is that of 4-aminobutyrate aminotransferase, mitochondrial (ABAT) from Bos taurus (Bovine).